We begin with the raw amino-acid sequence, 530 residues long: MARLFTPSESKYYLMALDAGTGSIRAVIFDLEGNQIAVGQAEWRHLAVPDVPGSMEFDLNKNWQLACECMRQALHNAGIAPEYIAAVSACSMREGIVLYNNEGAPIWACANVDARAAREVSELKELHNNTFENEVYRATGQTLALSAIPRLLWLAHHRSDIYRQASTITMISDWLAYMLSGELAVDPSNAGTTGLLDLTTRDWKPALLDMAGLRADILSPVKETGTLLGVVSSQAAELCGLKAGTPVVVGGGDVQLGCLGLGVVRPAQTAVLGGTFWQQVVNLAAPVTDPEMNVRVNPHVIPGMVQAESISFFTGLTMRWFRDAFCAEEKLIAERLGIDTYTLLEEMASRVPPGSWGVMPIFSDRMRFKTWYHAAPSFINLSIDPDKCNKATLFRALEENAAIVSACNLQQIADFSNIHPSSLVFAGGGSKGKLWSQILADVSGLPVNIPVVKEATALGCAIAAGVGAGIFSSMAETGERLVRWERTHTPDPEKHELYQDSRDKWQAVYQDQLGLVDHGLTTSLWKAPGL.

Belongs to the FGGY kinase family.

It localises to the cytoplasm. The catalysed reaction is (S)-4,5-dihydroxypentane-2,3-dione + ATP = (2S)-2-hydroxy-3,4-dioxopentyl phosphate + ADP + H(+). Functionally, catalyzes the phosphorylation of autoinducer-2 (AI-2) to phospho-AI-2, which subsequently inactivates the transcriptional regulator LsrR and leads to the transcription of the lsr operon. Phosphorylates the ring-open form of (S)-4,5-dihydroxypentane-2,3-dione (DPD), which is the precursor to all AI-2 signaling molecules, at the C5 position. The sequence is that of Autoinducer-2 kinase from Escherichia coli O139:H28 (strain E24377A / ETEC).